Reading from the N-terminus, the 71-residue chain is Disintegrin applaggin (71 aa).

A Disintegrin domain is found at 1–71 (EAGEECDCGS…SAGCPRNPFH (71 aa)). Disulfide bonds link C6–C21, C8–C16, C15–C38, C29–C35, C34–C58, and C47–C65. Positions 50–52 (RGD) match the Cell attachment site motif.

This sequence belongs to the venom metalloproteinase (M12B) family. P-II subfamily. P-IIa sub-subfamily. As to quaternary structure, monomer (disintegrin). In terms of tissue distribution, expressed by the venom gland.

The protein resides in the secreted. Its function is as follows. Inhibits fibrinogen interaction with platelets. Acts by binding to alpha-IIb/beta-3 (ITGA2B/ITGB3) on the platelet surface and inhibits aggregation induced by ADP, thrombin, platelet-activating factor and collagen. The protein is Disintegrin applaggin of Agkistrodon piscivorus piscivorus (Eastern cottonmouth).